The chain runs to 1227 residues: Tyrosine-protein kinase receptor ver-3 (1227 aa).

A signal peptide spans 1–17 (MKLKLTVLLILVHASAS). The Extracellular portion of the chain corresponds to 18–764 (YKPPAIEVED…VQVNNAPKGS (747 aa)). Positions 20–110 (PPAIEVEDYQ…RESDTGTYSC (91 aa)) constitute an Ig-like C2-type 1 domain. Cysteines 52 and 110 form a disulfide. N-linked (GlcNAc...) asparagine glycosylation is found at N119, N211, N245, N255, N381, N425, and N528. In terms of domain architecture, Ig-like C2-type 2 spans 200–325 (VNFECRYKKE…EHENKETKYT (126 aa)). A disulfide bridge connects residues C204 and C313. Ig-like C2-type domains lie at 565–666 (PHHE…TSID) and 673–758 (PSIT…VQVN). 2 disulfide bridges follow: C592/C650 and C696/C740. An N-linked (GlcNAc...) asparagine glycan is attached at N697. Residues 765-785 (LFFYWFLALLLLISIIAVFLL) form a helical membrane-spanning segment. Over 786-1227 (TCKLRASNRL…ERYLIVESHA (442 aa)) the chain is Cytoplasmic. The Protein kinase domain maps to 847-1175 (LEILNPIGSG…HMRDSSSQFL (329 aa)). Residues 853-861 (IGSGHFGVV) and K886 each bind ATP. The Proton acceptor role is filled by D1030. The disordered stretch occupies residues 1194-1227 (DWIQDSRPDVPNVSFQKSPKKQKEERYLIVESHA). Over residues 1214 to 1227 (KQKEERYLIVESHA) the composition is skewed to basic and acidic residues.

It belongs to the protein kinase superfamily. Tyr protein kinase family. As to expression, expressed in the ALA neuron.

The protein localises to the cell membrane. The catalysed reaction is L-tyrosyl-[protein] + ATP = O-phospho-L-tyrosyl-[protein] + ADP + H(+). Its function is as follows. Receptor tyrosine kinase which may be involved, downstream of pvf-1, in the positioning of ray 1, the most anterior ray sensillum in the male tail. This Caenorhabditis elegans protein is Tyrosine-protein kinase receptor ver-3.